We begin with the raw amino-acid sequence, 833 residues long: Leucine--tRNA ligase (833 aa).

The 'HIGH' region motif lies at 41–52 (PYPSGAGLHVGH). The 'KMSKS' region signature appears at 610–614 (KMSKS). Position 613 (lysine 613) interacts with ATP.

Belongs to the class-I aminoacyl-tRNA synthetase family.

It localises to the cytoplasm. The catalysed reaction is tRNA(Leu) + L-leucine + ATP = L-leucyl-tRNA(Leu) + AMP + diphosphate. The chain is Leucine--tRNA ligase from Streptococcus pyogenes serotype M12 (strain MGAS2096).